Consider the following 476-residue polypeptide: Tryptophan--tRNA ligase, cytoplasmic (476 aa).

Residues 1–117 (MADMSNGEQG…LIVRFGSSKI (117 aa)) form a dispensable to the catalytic activity region. One can recognise a WHEP-TRS domain in the interval 13 to 69 (SPLELFHSIAAQGELVRDLKARNAAKDEIDSAVKMLLSLKTSYKAATGEDYKVDCPP). The disordered stretch occupies residues 63–83 (YKVDCPPGDPAPESGEGLDAT). At Lys159 the chain carries N6-succinyllysine. The 'HIGH' region motif lies at 169–178 (PSSEAMHVGH). The 'KMSKS' region signature appears at 354-358 (KMSAS). The residue at position 356 (Ser356) is a Phosphoserine.

The protein belongs to the class-I aminoacyl-tRNA synthetase family. Homodimer. Interacts with oxidized form of GAPDH. Proteolytic cleavage generates 2 forms; T1-TrpRS and T2-TrpRS.

It is found in the cytoplasm. The enzyme catalyses tRNA(Trp) + L-tryptophan + ATP = L-tryptophyl-tRNA(Trp) + AMP + diphosphate + H(+). In terms of biological role, T1-TrpRS has aminoacylation activity while T2-TrpRS lacks it. T1-TrpRS and T2-TrpRS possess angiostatic activity. T2-TrpRS inhibits fluid shear stress-activated responses of endothelial cells. Regulates ERK, Akt, and eNOS activation pathways that are associated with angiogenesis, cytoskeletal reorganization and shear stress-responsive gene expression. The chain is Tryptophan--tRNA ligase, cytoplasmic (WARS1) from Bos taurus (Bovine).